The primary structure comprises 274 residues: Diaminopimelate epimerase (274 aa).

Asparagine 11 and asparagine 65 together coordinate substrate. The Proton donor role is filled by cysteine 74. Substrate is bound by residues 75–76 (GN), asparagine 158, asparagine 191, and 209–210 (ER). Cysteine 218 functions as the Proton acceptor in the catalytic mechanism. Substrate is bound at residue 219-220 (GT).

It belongs to the diaminopimelate epimerase family. Homodimer.

It is found in the cytoplasm. The catalysed reaction is (2S,6S)-2,6-diaminopimelate = meso-2,6-diaminopimelate. Its pathway is amino-acid biosynthesis; L-lysine biosynthesis via DAP pathway; DL-2,6-diaminopimelate from LL-2,6-diaminopimelate: step 1/1. Its function is as follows. Catalyzes the stereoinversion of LL-2,6-diaminopimelate (L,L-DAP) to meso-diaminopimelate (meso-DAP), a precursor of L-lysine and an essential component of the bacterial peptidoglycan. This Carboxydothermus hydrogenoformans (strain ATCC BAA-161 / DSM 6008 / Z-2901) protein is Diaminopimelate epimerase.